A 66-amino-acid chain; its full sequence is Large ribosomal subunit protein uL29 (66 aa).

The protein belongs to the universal ribosomal protein uL29 family.

The chain is Large ribosomal subunit protein uL29 from Borrelia garinii subsp. bavariensis (strain ATCC BAA-2496 / DSM 23469 / PBi) (Borreliella bavariensis).